A 643-amino-acid polypeptide reads, in one-letter code: Pescadillo homolog (643 aa).

The region spanning 319–412 (KLKTLFKGLK…RLLPTNKYFM (94 aa)) is the BRCT domain. Disordered stretches follow at residues 437–475 (AARK…PENE), 492–571 (TDSL…YREN), and 609–643 (DKNA…QILA). Residues 464–475 (SDDEEVQDPENE) show a composition bias toward acidic residues. The segment covering 492–518 (TDSLNSGKKEGADDATDNGKDAAEKKQ) has biased composition (basic and acidic residues). Residues 524-544 (GESDDEDEEEEDDDDGEEEED) are compositionally biased toward acidic residues. The stretch at 569–643 (RENEAEKKIV…QKQQRKQILA (75 aa)) forms a coiled coil. Over residues 609-635 (DKNARLLANKRERIEKQKRAEQMEKQK) the composition is skewed to basic and acidic residues.

It belongs to the pescadillo family.

It is found in the nucleus. The protein resides in the nucleolus. Its subcellular location is the nucleoplasm. In terms of biological role, required for maturation of ribosomal RNAs and formation of the large ribosomal subunit. This is Pescadillo homolog from Anopheles gambiae (African malaria mosquito).